The following is a 298-amino-acid chain: Tyrosine recombinase XerC (298 aa).

The region spanning 1–84 (MNHIQEAFLN…TLRTFYEYWM (84 aa)) is the Core-binding (CB) domain. The Tyr recombinase domain maps to 105 to 286 (YLPQFFYEEE…SNQQLRKVYL (182 aa)). Residues arginine 145, lysine 169, histidine 238, arginine 241, and histidine 264 contribute to the active site. Tyrosine 273 (O-(3'-phospho-DNA)-tyrosine intermediate) is an active-site residue.

Belongs to the 'phage' integrase family. XerC subfamily. Forms a cyclic heterotetrameric complex composed of two molecules of XerC and two molecules of XerD.

Its subcellular location is the cytoplasm. Its function is as follows. Site-specific tyrosine recombinase, which acts by catalyzing the cutting and rejoining of the recombining DNA molecules. The XerC-XerD complex is essential to convert dimers of the bacterial chromosome into monomers to permit their segregation at cell division. It also contributes to the segregational stability of plasmids. This Staphylococcus aureus (strain JH1) protein is Tyrosine recombinase XerC.